The following is an 87-amino-acid chain: MARVTVEDCLEHVDNRFELVMLSTKRARQLATGGKEPRVAWENDKPTVVALREIAEGIVTPEFIAAEEIVTEDPVFAAFEDENNEAV.

Belongs to the RNA polymerase subunit omega family. In terms of assembly, the RNAP catalytic core consists of 2 alpha, 1 beta, 1 beta' and 1 omega subunit. When a sigma factor is associated with the core the holoenzyme is formed, which can initiate transcription.

The catalysed reaction is RNA(n) + a ribonucleoside 5'-triphosphate = RNA(n+1) + diphosphate. Its function is as follows. Promotes RNA polymerase assembly. Latches the N- and C-terminal regions of the beta' subunit thereby facilitating its interaction with the beta and alpha subunits. The protein is DNA-directed RNA polymerase subunit omega of Pseudomonas entomophila (strain L48).